The primary structure comprises 226 residues: E3 ubiquitin-protein ligase RNF186 (226 aa).

Residues 39 to 85 form an RING-type zinc finger; it reads CLVCREPYSGVRPPKLLGCQHAFCAVCLKLLLCVQDDAWSIPCPLCR. The interval 121-143 is disordered; it reads GLANPATLTAGQPREAGEEEQDA. The next 2 membrane-spanning stretches (helical) occupy residues 157–177 and 179–199; these read HLLL…PGVI and WVLS…CSHP.

As to quaternary structure, interacts with BNIP1. Post-translationally, polyubiquitinated. 'Lys-29' autoubiquitination leads to proteasomal degradation.

The protein localises to the endoplasmic reticulum membrane. It carries out the reaction S-ubiquitinyl-[E2 ubiquitin-conjugating enzyme]-L-cysteine + [acceptor protein]-L-lysine = [E2 ubiquitin-conjugating enzyme]-L-cysteine + N(6)-ubiquitinyl-[acceptor protein]-L-lysine.. Its pathway is protein modification; protein ubiquitination. Its function is as follows. E3 ubiquitin protein ligase that is part of an apoptotic signaling pathway activated by endoplasmic reticulum stress. Stimulates the expression of proteins specific of the unfolded protein response (UPR), ubiquitinates BNIP1 and regulates its localization to the mitochondrion and induces calcium release from the endoplasmic reticulum that ultimately leads to cell apoptosis. Plays a role in the maintenance of intestinal homeostasis and clearance of enteric pathogens. Upon NOD2 stimulation, ubiquitinates the ER stress sensor activating transcription factor 6/ATF6 and promotes the unfolded protein response UPR. Participates in basal level of autophagy maintenance by regulating the ubiquitination of EPHB2. Upon stimulation by ligand EFNB1, ubiquitinates EPHB2 and further recruits MAP1LC3B for autophagy induction. Controls nutrient sensing by ubiquitinating Sestrin-2/SESN2, which is an intracellular sensor of cytosolic leucine and inhibitor of mTORC1 activity. The protein is E3 ubiquitin-protein ligase RNF186 of Bos taurus (Bovine).